We begin with the raw amino-acid sequence, 190 residues long: Adenine phosphoribosyltransferase (190 aa).

This sequence belongs to the purine/pyrimidine phosphoribosyltransferase family. Homodimer.

The protein resides in the cytoplasm. It carries out the reaction AMP + diphosphate = 5-phospho-alpha-D-ribose 1-diphosphate + adenine. It participates in purine metabolism; AMP biosynthesis via salvage pathway; AMP from adenine: step 1/1. Catalyzes a salvage reaction resulting in the formation of AMP, that is energically less costly than de novo synthesis. This chain is Adenine phosphoribosyltransferase, found in Cupriavidus metallidurans (strain ATCC 43123 / DSM 2839 / NBRC 102507 / CH34) (Ralstonia metallidurans).